A 772-amino-acid polypeptide reads, in one-letter code: PDZ domain-containing protein 4 (772 aa).

In terms of domain architecture, PDZ spans 136–221 (EVELCKNSHQ…NISLLVARPE (86 aa)). The tract at residues 239-320 (DFGSENEGDL…TNTPGSLRKF (82 aa)) is disordered. A Phosphoserine modification is found at S242. Over residues 287–303 (RTDESTRNEESSEHDLL) the composition is skewed to basic and acidic residues. The stretch at 394–424 (VNRNESLGHEMAMLEEELRHLEFKCRNILRA) forms a coiled coil. Residues 450-573 (ASEPKKHELS…VGPEGSPYLS (124 aa)) form a disordered region. The segment covering 452–472 (EPKKHELSDISELPEKSDKDS) has biased composition (basic and acidic residues). A Phosphoserine modification is found at S459. Polar residues-rich tracts occupy residues 473–484 (TSAYNTGESCRS) and 502–511 (AGNSNLNRTP). The span at 535 to 552 (LSRDPEVGRRQHTEERVR) shows a compositional bias: basic and acidic residues.

The protein resides in the cytoplasm. The protein localises to the cell cortex. The sequence is that of PDZ domain-containing protein 4 (Pdzd4) from Mus musculus (Mouse).